We begin with the raw amino-acid sequence, 291 residues long: UDP-N-acetylenolpyruvoylglucosamine reductase (291 aa).

The FAD-binding PCMH-type domain maps to 22-187 (RIGGPARYFK…ASATFQLTKD (166 aa)). The active site involves R166. The active-site Proton donor is the C214. E283 is a catalytic residue.

It belongs to the MurB family. Requires FAD as cofactor.

The protein resides in the cytoplasm. The catalysed reaction is UDP-N-acetyl-alpha-D-muramate + NADP(+) = UDP-N-acetyl-3-O-(1-carboxyvinyl)-alpha-D-glucosamine + NADPH + H(+). Its pathway is cell wall biogenesis; peptidoglycan biosynthesis. Its function is as follows. Cell wall formation. This is UDP-N-acetylenolpyruvoylglucosamine reductase from Chlamydia trachomatis serovar A (strain ATCC VR-571B / DSM 19440 / HAR-13).